Consider the following 537-residue polypeptide: Ribonuclease III domain-containing protein RNC1, chloroplastic (537 aa).

The N-terminal 51 residues, 1 to 51 (MELCSSSPSSSLLRICSSSAPEISFSSSISQFPSKTQSILTKSRFQNLRIC), are a transit peptide targeting the chloroplast. RNase III domains lie at 141–283 (LLEV…LCFG) and 415–515 (EHPR…TIYG).

Interacts with RNA. Part of large ribonucleo-protein particles that contain CAF1 and/or CAF2.

The protein localises to the plastid. It localises to the chloroplast. In terms of biological role, binds specific group II introns in chloroplasts and facilitates their splicing. Acts on both subgroup IIA and subgroup IIB introns. The substrates of the subgroup II also require the CRM domain proteins CAF1 or CAF2. Binds both single-stranded and double-stranded RNA non-specifically, but lacks endonuclease activity. Required for plastid ribosome biogenesis. This is Ribonuclease III domain-containing protein RNC1, chloroplastic from Arabidopsis thaliana (Mouse-ear cress).